The sequence spans 351 residues: Methylthioribose-1-phosphate isomerase (351 aa).

Substrate-binding positions include Arg51–Ala53, Arg94, and Gln199. Asp240 (proton donor) is an active-site residue. Asn250 to Lys251 is a binding site for substrate.

Belongs to the EIF-2B alpha/beta/delta subunits family. MtnA subfamily. In terms of assembly, homodimer.

It carries out the reaction 5-(methylsulfanyl)-alpha-D-ribose 1-phosphate = 5-(methylsulfanyl)-D-ribulose 1-phosphate. Its pathway is amino-acid biosynthesis; L-methionine biosynthesis via salvage pathway; L-methionine from S-methyl-5-thio-alpha-D-ribose 1-phosphate: step 1/6. Catalyzes the interconversion of methylthioribose-1-phosphate (MTR-1-P) into methylthioribulose-1-phosphate (MTRu-1-P). The polypeptide is Methylthioribose-1-phosphate isomerase (Bacillus cereus (strain ZK / E33L)).